A 437-amino-acid polypeptide reads, in one-letter code: Ribulose bisphosphate carboxylase/oxygenase activase, chloroplastic (437 aa).

Over residues 1–10 the composition is skewed to polar residues; that stretch reads MATAVSTIGS. The tract at residues 1-26 is disordered; that stretch reads MATAVSTIGSVNRAPPNLNGSSSSAS. Position 165–172 (165–172) interacts with ATP; sequence GGKGQGKS.

This sequence belongs to the RuBisCO activase family.

It localises to the plastid. Its subcellular location is the chloroplast stroma. In terms of biological role, activation of RuBisCO (ribulose-1,5-bisphosphate carboxylase/oxygenase; EC 4.1.1.39) involves the ATP-dependent carboxylation of the epsilon-amino group of lysine leading to a carbamate structure. The chain is Ribulose bisphosphate carboxylase/oxygenase activase, chloroplastic (RCA) from Malus domestica (Apple).